Reading from the N-terminus, the 518-residue chain is Membrane-bound lytic murein transglycosylase F (518 aa).

The N-terminal stretch at 1-21 (MKKLKINYLFIGILALLLAVA) is a signal peptide. The segment at 22–269 (LWPSIPWFGK…RIEEKYLGHG (248 aa)) is non-LT domain. Residues 270–518 (DDFDYVDTRT…SRKGSEEKQN (249 aa)) form an LT domain region. Glutamate 314 is an active-site residue.

It in the N-terminal section; belongs to the bacterial solute-binding protein 3 family. This sequence in the C-terminal section; belongs to the transglycosylase Slt family.

The protein localises to the cell outer membrane. The enzyme catalyses Exolytic cleavage of the (1-&gt;4)-beta-glycosidic linkage between N-acetylmuramic acid (MurNAc) and N-acetylglucosamine (GlcNAc) residues in peptidoglycan, from either the reducing or the non-reducing ends of the peptidoglycan chains, with concomitant formation of a 1,6-anhydrobond in the MurNAc residue.. Murein-degrading enzyme that degrades murein glycan strands and insoluble, high-molecular weight murein sacculi, with the concomitant formation of a 1,6-anhydromuramoyl product. Lytic transglycosylases (LTs) play an integral role in the metabolism of the peptidoglycan (PG) sacculus. Their lytic action creates space within the PG sacculus to allow for its expansion as well as for the insertion of various structures such as secretion systems and flagella. This Escherichia coli O6:H1 (strain CFT073 / ATCC 700928 / UPEC) protein is Membrane-bound lytic murein transglycosylase F.